The primary structure comprises 593 residues: Trehalose synthase/amylase TreS (593 aa).

Residue Asp-90 coordinates substrate. Asn-132 lines the Ca(2+) pocket. 2 residues coordinate substrate: His-133 and Gln-198. A Ca(2+)-binding site is contributed by Asp-200. Residue Arg-228 participates in substrate binding. Asp-230 acts as the Nucleophile in catalysis. Ca(2+) is bound by residues Tyr-234, Leu-235, and Glu-237. The active-site Proton donor is Glu-272. Residues His-341 and Asp-342 each coordinate substrate.

The protein belongs to the glycosyl hydrolase 13 family. TreS subfamily. In terms of assembly, homohexamer.

It catalyses the reaction D-maltose = alpha,alpha-trehalose. It carries out the reaction Endohydrolysis of (1-&gt;4)-alpha-D-glucosidic linkages in polysaccharides containing three or more (1-&gt;4)-alpha-linked D-glucose units.. The protein operates within glycan biosynthesis; glycogen biosynthesis. The amylase activity is stimulated by addition of Ca(2+), but this cation and other divalent cations inhibit the trehalose synthase activity. In addition, trehalose synthase activity, but not amylase activity, is strongly inhibited, and in a competitive manner, by validoxylamine. On the other hand, amylase, but not trehalose synthase activity, is inhibited by the known transition-state amylase inhibitor, acarbose, suggesting the possibility of two different active sites. Other metal ions such as Mg(2+), Mn(2+), and Co(2+) are also somewhat effective in the stimulation of amylase activity, but Hg(2+), Cu(2+), Ni(2+) and Zn(2+) are inhibitory. Catalyzes the reversible interconversion of maltose and trehalose by transglucosylation. Maltose is the preferred substrate. To a lesser extent, also displays amylase activity, catalyzing the endohydrolysis of (1-&gt;4)-alpha-D-glucosidic linkages in glycogen and maltooligosaccharides such as maltoheptaose, to produce maltose which then can be converted to trehalose. TreS plays a key role in the utilization of trehalose for the production of glycogen and alpha-glucan via the TreS-Pep2 branch involved in the biosynthesis of maltose-1-phosphate (M1P). Might also function as a sensor and/or regulator of trehalose levels within the cell. Thus, when trehalose levels in the cell become dangerously low, TreS can expedite the conversion of glycogen to maltose via its amylase activity and then convert the maltose to trehalose; but this enzyme also can expedite or promote the conversion of trehalose to glycogen when cytoplasmic trehalose levels become too high. Is also able to catalyze the hydrolytic cleavage of alpha-aryl glucosides, as well as alpha-glucosyl fluoride in vitro. The polypeptide is Trehalose synthase/amylase TreS (Mycolicibacterium smegmatis (strain ATCC 700084 / mc(2)155) (Mycobacterium smegmatis)).